Consider the following 154-residue polypeptide: Egg-lysin (154 aa).

An N-terminal signal peptide occupies residues 1 to 18 (MKLLVLWVFAMMATVAMS).

Monomer. Homodimer. Molecules associate into dimers and then rapidly dissociate again. Interacts (as a monomer) with the egg vitelline layer protein VERL (via VERL repeats); each VERL chain can bind multiple copies of lysin. As to expression, sperm.

The protein localises to the cytoplasmic vesicle. Its subcellular location is the secretory vesicle. It is found in the acrosome lumen. Its function is as follows. Creates a 3 um hole in the egg vitelline layer through which the sperm passes. Does not have enzyme activity. Species-specific interaction between the sperm protein lysin and the egg protein VERL exposes a basic surface on lysin that may dissociate the egg vitelline layer via electrostatic repulsion. Plays a role in ensuring species-specific fertilization. This Haliotis fulgens (Green abalone) protein is Egg-lysin.